Here is a 538-residue protein sequence, read N- to C-terminus: Adenine deaminase (538 aa).

It belongs to the metallo-dependent hydrolases superfamily. Adenine deaminase family. Mn(2+) serves as cofactor.

The catalysed reaction is adenine + H2O + H(+) = hypoxanthine + NH4(+). The polypeptide is Adenine deaminase (Methanothermobacter thermautotrophicus (strain ATCC 29096 / DSM 1053 / JCM 10044 / NBRC 100330 / Delta H) (Methanobacterium thermoautotrophicum)).